The sequence spans 118 residues: Small ribosomal subunit protein uS13 (118 aa).

A disordered region spans residues Gly-94–Lys-118.

Belongs to the universal ribosomal protein uS13 family. As to quaternary structure, part of the 30S ribosomal subunit. Forms a loose heterodimer with protein S19. Forms two bridges to the 50S subunit in the 70S ribosome.

Located at the top of the head of the 30S subunit, it contacts several helices of the 16S rRNA. In the 70S ribosome it contacts the 23S rRNA (bridge B1a) and protein L5 of the 50S subunit (bridge B1b), connecting the 2 subunits; these bridges are implicated in subunit movement. Contacts the tRNAs in the A and P-sites. The polypeptide is Small ribosomal subunit protein uS13 (Salmonella typhi).